Consider the following 322-residue polypeptide: Epiphycan (322 aa).

An N-terminal signal peptide occupies residues 1 to 19 (MGMLARVALGLIIIDAVLA). The disordered stretch occupies residues 58 to 108 (KVSERLSGNRELLTPGPQLGDNQDEDKDEESTPRLIDGSSPQEPEFPGLLG). O-linked (Xyl...) (dermatan sulfate) serine glycosylation occurs at serine 64. Residue serine 96 is glycosylated (O-linked (GalNAc...) serine). The 38-residue stretch at 106 to 143 (LLGPHTNEDFPTCLLCTCISTTVYCDDHELDAIPPLPK) folds into the LRRNT domain. Cysteine 118 and cysteine 130 are oxidised to a cystine. 5 LRR repeats span residues 144–165 (KTTY…DFAS), 168–189 (DLKR…AFRK), 192–213 (HLQE…PNTL), 238–258 (DLHH…PLPE), and 259–280 (SLRA…TFCN). Cysteines 279 and 312 form a disulfide. N-linked (GlcNAc...) asparagine glycans are attached at residues asparagine 283 and asparagine 302. The LRR 6 repeat unit spans residues 290–310 (ALEDIRLDGNPINLSRTPQAY).

This sequence belongs to the small leucine-rich proteoglycan (SLRP) family. SLRP class III subfamily. Post-translationally, the O-linked polysaccharide on Ser-96 is probably the mucin type linked to GalNAc. There is one glycosaminoglycan chain, known to be dermatan sulfate, and it is probably the O-glycosylation at Ser-64. Confined to the middle zone of embryonic epiphyseal cartilage consisting of flattened chondrocytes and the ossifying region in the limb buds of chick embryos. Has also been detected in testis.

It localises to the secreted. The protein localises to the extracellular space. Its subcellular location is the extracellular matrix. In terms of biological role, may have a role in bone formation and also in establishing the ordered structure of cartilage through matrix organization. This chain is Epiphycan (Epyc), found in Mus musculus (Mouse).